A 131-amino-acid polypeptide reads, in one-letter code: Global transcriptional regulator Spx 2 (131 aa).

A disulfide bridge links Cys-10 with Cys-13.

The protein belongs to the ArsC family. Spx subfamily. Interacts with the C-terminal domain of the alpha subunit of the RNAP.

It localises to the cytoplasm. Global transcriptional regulator that plays a key role in stress response and exerts either positive or negative regulation of genes. Acts by interacting with the C-terminal domain of the alpha subunit of the RNA polymerase (RNAP). This interaction can enhance binding of RNAP to the promoter region of target genes and stimulate their transcription, or block interaction of RNAP with activator. This Bacillus anthracis protein is Global transcriptional regulator Spx 2.